The sequence spans 245 residues: MSQVNMRDMLKAGVHFGHQTRYWNPKMGKYIFGARNKIHIINLEKTLPMFNEALTFVERLAQGKNKILFVGTKRSAGKIVAEEAARCGSPYVDHRWLGGMLTNFKTIRASIKRLRDLEVQAEDGTFAKLTKKEALMRTRDLEKLDRSLGGIKDMGGLPDALFVIDVDHERIAITEANKLGIPVIGVVDTNSSPEGVDYIIPGNDDAIRAIQLYMGSMADAVIRGRNNVAGGTVEFAAEETQAAAE.

It belongs to the universal ribosomal protein uS2 family.

The polypeptide is Small ribosomal subunit protein uS2 (Pseudomonas fluorescens (strain Pf0-1)).